A 353-amino-acid chain; its full sequence is tRNA-specific 2-thiouridylase MnmA 2 (353 aa).

An ATP-binding site is contributed by 6 to 13; that stretch reads LLSGGVDS. Positions 92 to 94 are interaction with target base in tRNA; it reads NPD. The active-site Nucleophile is C97. An intrachain disulfide couples C97 to C192. G120 is an ATP binding site. Residues 142-144 are interaction with tRNA; sequence KDQ. The active-site Cysteine persulfide intermediate is C192.

This sequence belongs to the MnmA/TRMU family.

It is found in the cytoplasm. The enzyme catalyses S-sulfanyl-L-cysteinyl-[protein] + uridine(34) in tRNA + AH2 + ATP = 2-thiouridine(34) in tRNA + L-cysteinyl-[protein] + A + AMP + diphosphate + H(+). In terms of biological role, catalyzes the 2-thiolation of uridine at the wobble position (U34) of tRNA, leading to the formation of s(2)U34. In Bacteroides fragilis (strain YCH46), this protein is tRNA-specific 2-thiouridylase MnmA 2.